A 2725-amino-acid polypeptide reads, in one-letter code: Teneurin-1 (2725 aa).

The disordered stretch occupies residues 1 to 48; that stretch reads MEQTDCKPYQPLPKVKHEMDLAYTSSSDESEDGRKPRQSYNSRETLHE. A Teneurin N-terminal domain is found at 1 to 318; that stretch reads MEQTDCKPYQ…KPYRCCNWKC (318 aa). Topologically, residues 1–324 are cytoplasmic; the sequence is MEQTDCKPYQ…NWKCTALSAT (324 aa). Positions 62–65 match the Nuclear localization signal (NLS) motif; sequence RKRK. Serine 105 is subject to Phosphoserine. Threonine 109 carries the post-translational modification Phosphothreonine. Residue serine 116 is modified to Phosphoserine. The segment covering 174 to 189 has biased composition (polar residues); sequence AGSTQDVQSSPHNQFT. The tract at residues 174–241 is disordered; sequence AGSTQDVQSS…PAPPTSTQDS (68 aa). A compositionally biased stretch (pro residues) spans 192–201; the sequence is PLPPPPPPPH. Residues 290-297 carry the Required for interaction with SORBS1 (Ten-1 ICD form) motif; the sequence is PPPRPLPR. The chain crosses the membrane as a helical span at residues 325 to 345; that stretch reads AITVTLALLLAYVIAVHLFGL. Residues 346–2725 lie on the Extracellular side of the membrane; it reads TWQLQPVEGE…FMRQSEIGRR (2380 aa). An N-linked (GlcNAc...) asparagine glycan is attached at asparagine 433. EGF-like domains follow at residues 528-559, 560-591, 592-624, 625-657, 658-691, 692-721, 722-753, and 761-796; these read IMDD…PDCA, RDSC…ECDV, PEEQ…EICE, EEDC…NCET, PLPV…SDCS, TELC…GPTC, EERS…DHCT, and VRDG…TGCN. Cystine bridges form between cysteine 532–cysteine 542, cysteine 536–cysteine 547, cysteine 549–cysteine 558, cysteine 567–cysteine 578, cysteine 580–cysteine 589, cysteine 596–cysteine 607, cysteine 601–cysteine 612, cysteine 614–cysteine 623, cysteine 628–cysteine 639, cysteine 633–cysteine 644, cysteine 646–cysteine 655, cysteine 666–cysteine 679, cysteine 681–cysteine 690, cysteine 695–cysteine 705, cysteine 699–cysteine 710, cysteine 712–cysteine 721, cysteine 726–cysteine 736, cysteine 730–cysteine 741, cysteine 743–cysteine 752, cysteine 765–cysteine 775, cysteine 769–cysteine 784, and cysteine 786–cysteine 795. N-linked (GlcNAc...) asparagine glycosylation is found at asparagine 905 and asparagine 1084. NHL repeat units lie at residues 1194–1219, 1292–1336, 1351–1402, 1414–1458, and 1481–1524; these read LFAP…VRRI, SHCG…NAVI, LSCD…IAGR, FLVS…VTTN, and CFSG…ISRN. A YD 1 repeat occupies 1534 to 1553; the sequence is YEIASPADQELYQFTVNGTH. N-linked (GlcNAc...) asparagine glycosylation is found at asparagine 1550 and asparagine 1567. 4 YD repeats span residues 1570-1590, 1608-1632, 1633-1654, and 1655-1675; these read YNSE…VHIR, YWLT…ALMT, YPGN…TVYE, and YDPE…SSFH. 5 N-linked (GlcNAc...) asparagine glycosylation sites follow: asparagine 1663, asparagine 1699, asparagine 1757, asparagine 1781, and asparagine 1842. YD repeat units follow at residues 1845–1864, 1865–1885, 1886–1904, 1905–1925, 1933–1949, 1950–1969, 1970–1989, 1992–2012, 2015–2035, 2085–2105, and 2113–2133; these read YSPS…EKME, YDQS…WSYT, YLEK…YIFE, YDQP…HSLQ, YRNI…FIQD, YSRD…RRVL, YKYT…TQVT, YEES…FICT, YRQT…EGLV, YDLN…FSAN, and YEIL…VGRM. Asparagine 2145 is a glycosylation site (N-linked (GlcNAc...) asparagine). YD repeat units follow at residues 2153-2173, 2174-2194, 2196-2216, 2228-2248, and 2250-2270; these read YDAD…WRYS, YDLN…LTPL, YDLR…DEDG, YNSN…TVQY, and YDGL…LQFF. Residue asparagine 2285 is glycosylated (N-linked (GlcNAc...) asparagine). YD repeat units lie at residues 2296-2313 and 2314-2337; these read YDLQ…GEEY and YVAC…IKEI. Phosphoserine is present on serine 2580. Asparagine 2602 carries an N-linked (GlcNAc...) asparagine glycan.

The protein belongs to the tenascin family. Teneurin subfamily. Homodimer; disulfide-linked. Heterodimer with either TENM2 or TENM3. May also form heterodimer with TENM4. Ten-1 ICD interacts with SORBS1 (via third SH3 domain). Interacts with MBD1. Ten-1 ICD interacts with HINT1. In terms of processing, derives from the plasma membrane form by proteolytic processing. Further proteolytic cleavage may be generated. Expressed in fetal brain.

The protein localises to the cell membrane. Its subcellular location is the nucleus. It is found in the nucleus speckle. The protein resides in the nucleus matrix. It localises to the cytoplasm. The protein localises to the cytoskeleton. Functionally, involved in neural development, regulating the establishment of proper connectivity within the nervous system. May function as a cellular signal transducer. Its function is as follows. Plays a role in the regulation of neuroplasticity in the limbic system. Mediates a rapid reorganization of actin- and tubulin-based cytoskeleton elements with an increase in dendritic arborization and spine density formation of neurons in the hippocampus and amygdala. Induces BDNF transcription inhibition in neurons. Activates the mitogen-activated protein (MAP) kinase 2 (MEK2) and extracellular signal-regulated kinase (ERK) cascade. Also acts as a bioactive neuroprotective peptide on limbic neurons of the brain and regulates stress-induced behavior: attenuates alkalosis-associated necrotic cell death and the effects of corticotropin-releasing factor (CRF) on c-fos/FOS induction and on the reinstatement of cocaine seeking. Induces gene transcription activation. The chain is Teneurin-1 (TENM1) from Homo sapiens (Human).